A 122-amino-acid chain; its full sequence is Large ribosomal subunit protein bL12 (122 aa).

This sequence belongs to the bacterial ribosomal protein bL12 family. As to quaternary structure, homodimer. Part of the ribosomal stalk of the 50S ribosomal subunit. Forms a multimeric L10(L12)X complex, where L10 forms an elongated spine to which 2 to 4 L12 dimers bind in a sequential fashion. Binds GTP-bound translation factors.

In terms of biological role, forms part of the ribosomal stalk which helps the ribosome interact with GTP-bound translation factors. Is thus essential for accurate translation. In Shewanella denitrificans (strain OS217 / ATCC BAA-1090 / DSM 15013), this protein is Large ribosomal subunit protein bL12.